A 540-amino-acid polypeptide reads, in one-letter code: Exopolysaccharide phosphotransferase SCO6022 (540 aa).

It belongs to the stealth family.

This is Exopolysaccharide phosphotransferase SCO6022 from Streptomyces coelicolor (strain ATCC BAA-471 / A3(2) / M145).